The following is a 193-amino-acid chain: Acyl carrier protein phosphodiesterase (193 aa).

It belongs to the AcpH family.

It carries out the reaction holo-[ACP] + H2O = apo-[ACP] + (R)-4'-phosphopantetheine + H(+). In terms of biological role, converts holo-ACP to apo-ACP by hydrolytic cleavage of the phosphopantetheine prosthetic group from ACP. The polypeptide is Acyl carrier protein phosphodiesterase (Salmonella dublin (strain CT_02021853)).